Consider the following 206-residue polypeptide: Tumor protein D54 (206 aa).

Residue Met1 is modified to N-acetylmethionine. Residues 1-14 are compositionally biased toward polar residues; the sequence is MDSAGQDINLNSPN. The disordered stretch occupies residues 1–24; it reads MDSAGQDINLNSPNKGLLSDSMTD. Ser3, Ser12, Ser19, and Ser21 each carry phosphoserine. The stretch at 38 to 82 forms a coiled coil; sequence VEGLTEAEEEELRAELTKVEEEIVTLRQVLAAKERHCGELKRRLG. 3 positions are modified to phosphoserine: Ser96, Ser149, and Ser161. Thr163 is modified (phosphothreonine). A Phosphoserine modification is found at Ser166. Thr173 is modified (phosphothreonine). The span at 175-185 shows a compositional bias: basic and acidic residues; it reads KSKVVGDRENG. Residues 175–206 form a disordered region; that stretch reads KSKVVGDRENGSDNLPSSAGSGDKPLSDPAPF. Phosphoserine is present on residues Ser192 and Ser195.

It belongs to the TPD52 family. Forms a homodimer or heterodimer with other members of the family. Interacts with MAL2.

In Homo sapiens (Human), this protein is Tumor protein D54 (TPD52L2).